The sequence spans 102 residues: Large ribosomal subunit protein uL24 (102 aa).

Positions 44–65 (HAKPSQDNPQGGILNQEAPIHS) are disordered.

Belongs to the universal ribosomal protein uL24 family. Part of the 50S ribosomal subunit.

In terms of biological role, one of two assembly initiator proteins, it binds directly to the 5'-end of the 23S rRNA, where it nucleates assembly of the 50S subunit. One of the proteins that surrounds the polypeptide exit tunnel on the outside of the subunit. In Shouchella clausii (strain KSM-K16) (Alkalihalobacillus clausii), this protein is Large ribosomal subunit protein uL24.